The chain runs to 808 residues: Aminotransferase ALT4 (808 aa).

This sequence belongs to the class-II pyridoxal-phosphate-dependent aminotransferase family. BioF subfamily. Requires pyridoxal 5'-phosphate as cofactor.

It participates in mycotoxin biosynthesis. In terms of biological role, aminotransferase; part of the gene cluster that mediates the biosynthesis of the host-selective toxins (HSTs) AAL-toxins, sphinganine-analog mycotoxins responsible for Alternaria stem canker on tomato by the tomato pathotype. The biosynthesis starts with the polyketide synthase ALT1-catalyzed C-16 carbon chain assembly from one starter acetyl-CoA unit with malonyl-CoA extender units. ALT1 also selectively transfers methyl groups at the first and the third cycle of chain elongation for AAL toxin. The C-16 polyketide chain is released from the enzyme by a nucleophilic attack of a carbanion, which is derived from R-carbon of glycin by decarboxylation, on the carbonyl carbon of polyketide acyl chain. This step is probably catalyzed by a pyridoxal 5'-phosphate-dependent aminoacyl transferase ALT4. The respective functions of the other enzymes encoded by the cluster have still to be elucidated. The sphingosine N-acyltransferase-like protein ALT7 seems not to act as a resistance/self-tolerance factor against the toxin in the toxin biosynthetic gene cluster, contrary to what is expected. The polypeptide is Aminotransferase ALT4 (Alternaria alternata (Alternaria rot fungus)).